We begin with the raw amino-acid sequence, 637 residues long: Threonine--tRNA ligase (637 aa).

In terms of domain architecture, TGS spans 1-61; sequence MIKISLKNGK…NKDCKVEILT (61 aa). The segment at 242–532 is catalytic; sequence DHRKLGKELD…LIEHYAGAFP (291 aa). Zn(2+) is bound by residues Cys333, His384, and His509.

The protein belongs to the class-II aminoacyl-tRNA synthetase family. As to quaternary structure, homodimer. It depends on Zn(2+) as a cofactor.

It is found in the cytoplasm. The enzyme catalyses tRNA(Thr) + L-threonine + ATP = L-threonyl-tRNA(Thr) + AMP + diphosphate + H(+). Its function is as follows. Catalyzes the attachment of threonine to tRNA(Thr) in a two-step reaction: L-threonine is first activated by ATP to form Thr-AMP and then transferred to the acceptor end of tRNA(Thr). Also edits incorrectly charged L-seryl-tRNA(Thr). The sequence is that of Threonine--tRNA ligase from Clostridium kluyveri (strain NBRC 12016).